The chain runs to 328 residues: Zinc transporter ZIP13 (328 aa).

Over 1 to 7 the chain is Lumenal; the sequence is MPGCPCP. Residues 8-28 form a helical membrane-spanning segment; it reads GCGMAGPRLLFLTALALELLG. Over 29 to 68 the chain is Cytoplasmic; the sequence is RAGGSQPALRSRGTATACRLDNKESESWGALLSGERLDTW. Residues 69-89 traverse the membrane as a helical segment; it reads ICSLLGSLMVGLSGVFPLLVI. Over 90–108 the chain is Lumenal; it reads PLEMGTMLRSEAGAWHLKQ. A helical membrane pass occupies residues 109–129; the sequence is LLSFALGGLLGNVFLHLLPEA. Topologically, residues 130-149 are cytoplasmic; sequence WAYTCSASPGGEGQSLQQQQ. The helical transmembrane segment at 150 to 170 threads the bilayer; sequence QLGLWVIAGILTFLALEKMFL. Topologically, residues 171 to 199 are lumenal; sequence DSKEEGTSQVSGYLNLLANTIDNFTHGLA. The helical transmembrane segment at 200–220 threads the bilayer; that stretch reads VAASFLVSKKIGLLTTMAILL. The short motif at 221–226 is the XEXPHE-motif element; that stretch reads HEIPHE. The Cytoplasmic segment spans residues 221-242; sequence HEIPHEVGDFAILLRAGFDRWS. The helical transmembrane segment at 243 to 263 threads the bilayer; the sequence is AAKLQLSTALGGLLGAGFAIC. Residues 264 to 273 are Lumenal-facing; the sequence is TQSPKGVEET. A helical membrane pass occupies residues 274–294; it reads AAWVLPFTSGGFLYIALVNVL. Topologically, residues 295–306 are cytoplasmic; sequence PDLLEEEDPWRS. The chain crosses the membrane as a helical span at residues 307 to 327; sequence LQQLLLLCAGIVVMVLFSLFV. A topological domain (lumenal) is located at residue Asp328.

Belongs to the ZIP transporter (TC 2.A.5) family. As to quaternary structure, homodimer.

Its subcellular location is the golgi apparatus membrane. The protein resides in the cytoplasmic vesicle membrane. The protein localises to the endoplasmic reticulum membrane. The enzyme catalyses Zn(2+)(in) = Zn(2+)(out). In terms of biological role, functions as a zinc transporter transporting Zn(2+) from the Golgi apparatus to the cytosol and thus influences the zinc level at least in areas of the cytosol. May regulate beige adipocyte differentiation. The protein is Zinc transporter ZIP13 of Pongo abelii (Sumatran orangutan).